Consider the following 78-residue polypeptide: Large ribosomal subunit protein bL28 (78 aa).

The disordered stretch occupies residues 1–28 (MSRRCQVRGTKPEFGNNVSHSQRHTKRR).

Belongs to the bacterial ribosomal protein bL28 family.

The sequence is that of Large ribosomal subunit protein bL28 from Cutibacterium acnes (strain DSM 16379 / KPA171202) (Propionibacterium acnes).